The chain runs to 272 residues: Phosphatidylglycerol--prolipoprotein diacylglyceryl transferase (272 aa).

7 helical membrane passes run 17–37 (LQVH…WGLA), 55–75 (LVFY…VLFY), 90–110 (VWTG…AMLF), 125–145 (FVAP…FIGG), 174–194 (PSQI…LWWF), 202–222 (MAVS…MEFF), and 230–250 (GFIL…MLLI). Arg-138 provides a ligand contact to a 1,2-diacyl-sn-glycero-3-phospho-(1'-sn-glycerol).

Belongs to the Lgt family.

Its subcellular location is the cell inner membrane. It carries out the reaction L-cysteinyl-[prolipoprotein] + a 1,2-diacyl-sn-glycero-3-phospho-(1'-sn-glycerol) = an S-1,2-diacyl-sn-glyceryl-L-cysteinyl-[prolipoprotein] + sn-glycerol 1-phosphate + H(+). It participates in protein modification; lipoprotein biosynthesis (diacylglyceryl transfer). In terms of biological role, catalyzes the transfer of the diacylglyceryl group from phosphatidylglycerol to the sulfhydryl group of the N-terminal cysteine of a prolipoprotein, the first step in the formation of mature lipoproteins. This Acinetobacter baumannii (strain AB307-0294) protein is Phosphatidylglycerol--prolipoprotein diacylglyceryl transferase.